The chain runs to 178 residues: Crossover junction endodeoxyribonuclease RuvC (178 aa).

Residues Asp-11, Glu-71, and Asp-143 contribute to the active site. Residues Asp-11, Glu-71, and Asp-143 each contribute to the Mg(2+) site.

The protein belongs to the RuvC family. In terms of assembly, homodimer which binds Holliday junction (HJ) DNA. The HJ becomes 2-fold symmetrical on binding to RuvC with unstacked arms; it has a different conformation from HJ DNA in complex with RuvA. In the full resolvosome a probable DNA-RuvA(4)-RuvB(12)-RuvC(2) complex forms which resolves the HJ. Requires Mg(2+) as cofactor.

It is found in the cytoplasm. The enzyme catalyses Endonucleolytic cleavage at a junction such as a reciprocal single-stranded crossover between two homologous DNA duplexes (Holliday junction).. The RuvA-RuvB-RuvC complex processes Holliday junction (HJ) DNA during genetic recombination and DNA repair. Endonuclease that resolves HJ intermediates. Cleaves cruciform DNA by making single-stranded nicks across the HJ at symmetrical positions within the homologous arms, yielding a 5'-phosphate and a 3'-hydroxyl group; requires a central core of homology in the junction. The consensus cleavage sequence is 5'-(A/T)TT(C/G)-3'. Cleavage occurs on the 3'-side of the TT dinucleotide at the point of strand exchange. HJ branch migration catalyzed by RuvA-RuvB allows RuvC to scan DNA until it finds its consensus sequence, where it cleaves and resolves the cruciform DNA. This chain is Crossover junction endodeoxyribonuclease RuvC, found in Neisseria meningitidis serogroup C / serotype 2a (strain ATCC 700532 / DSM 15464 / FAM18).